We begin with the raw amino-acid sequence, 198 residues long: Type II secretion system protein J (198 aa).

Residues 1–7 constitute a propeptide, leader sequence; sequence MIRRSSG. Phenylalanine 8 carries the N-methylphenylalanine modification. A helical membrane pass occupies residues 8–28; sequence FTLVEMLLALAILAALSVAAV.

This sequence belongs to the GSP J family. Type II secretion is composed of four main components: the outer membrane complex, the inner membrane complex, the cytoplasmic secretion ATPase and the periplasm-spanning pseudopilus. Interacts with core component PulG. Post-translationally, cleaved by prepilin peptidase. In terms of processing, methylated by prepilin peptidase at the amino group of the N-terminal phenylalanine once the leader sequence is cleaved by prepilin peptidase.

It is found in the cell inner membrane. Its function is as follows. Component of the type II secretion system required for the energy-dependent secretion of extracellular factors such as proteases and toxins from the periplasm. Part of the pseudopilus tip complex that is critical for the recognition and binding of secretion substrates. The sequence is that of Type II secretion system protein J (pulJ) from Klebsiella pneumoniae.